The primary structure comprises 328 residues: MNLIHFGAGNIGCGFIAPILSSIVDHIYFVDNNIDIVNKINTQKLIKIHTSDSKKISITNISAWLLTDFINYKKTWNEVSLLTISIGIKNLKHIIYYVNQLIDYKIKNNQKLIIMCCENGIRVSSLFKSYFSNLNNNIYFVDVLVDRIVSNKNILNDYLECEDYYLWIVDKTQLPSDFKQVPNLTYTTSFDIQITKKIYMLNALHCSLAWFVFKNFSFNKYLYVYQALKNDKVVEFVNNYLNEVILVLNHKYNINLDELNNYKNQIIKRLNSNFIKDDLKRLARNTELKLSKNERILTILDYAKDNNLKHDILLLSYQNGLEYLKNNK.

L3 to G14 serves as a coordination point for NAD(+).

Belongs to the mannitol dehydrogenase family.

The catalysed reaction is D-mannitol 1-phosphate + NAD(+) = beta-D-fructose 6-phosphate + NADH + H(+). The protein is Mannitol-1-phosphate 5-dehydrogenase (mtlD) of Mycoplasma mycoides subsp. mycoides SC (strain CCUG 32753 / NCTC 10114 / PG1).